Consider the following 474-residue polypeptide: Probable phenylalanine--tRNA ligase alpha subunit (474 aa).

The segment at 1-150 is contains the major tRNA-Phe binding sites; it reads MSLSQKILEL…KRKLIYQAKE (150 aa). L-phenylalanine is bound by residues threonine 308, 350-352, and tyrosine 390; that span reads QVE. Glutamate 392 contacts Mg(2+). Phenylalanine 416 serves as a coordination point for L-phenylalanine.

It belongs to the class-II aminoacyl-tRNA synthetase family. Phe-tRNA synthetase alpha subunit type 2 subfamily. Tetramer of two alpha and two beta subunits. Requires Mg(2+) as cofactor.

The protein resides in the cytoplasm. The enzyme catalyses tRNA(Phe) + L-phenylalanine + ATP = L-phenylalanyl-tRNA(Phe) + AMP + diphosphate + H(+). This chain is Probable phenylalanine--tRNA ligase alpha subunit, found in Vairimorpha ceranae (strain BRL01) (Microsporidian parasite).